The chain runs to 302 residues: Urease accessory protein UreD 2 (302 aa).

The protein belongs to the UreD family. In terms of assembly, ureD, UreF and UreG form a complex that acts as a GTP-hydrolysis-dependent molecular chaperone, activating the urease apoprotein by helping to assemble the nickel containing metallocenter of UreC. The UreE protein probably delivers the nickel.

Its subcellular location is the cytoplasm. Its function is as follows. Required for maturation of urease via the functional incorporation of the urease nickel metallocenter. The polypeptide is Urease accessory protein UreD 2 (Brucella ovis (strain ATCC 25840 / 63/290 / NCTC 10512)).